The primary structure comprises 426 residues: MGIILGNGNVLNQAGELTPMEILVEKGRITAMGETLDRCGHDWIDCHGGMISAGLIDAHVHLREPGFEHKETIETGAKAAVQGGFTTVACMPNTRPSIDSVETVTYILDKASEAGMARVIPYGAITVRQLGKELTDFAGLKEAGIFALTDDGVGVQSTAMMKKAMQKAAELGIAIVAHCEDEDLLIPGAALHDGVVAARHGLPGIPSESESIHVGRDILLAEQTGVHYHVCHISAKESVRLVRDGKRAGVNVTCEVSPHHLLLCDEDIPDNLDTNWKMNPPLRSREDRAALIAGLKDGTIDMIATDHAPHTQEEKANGINRAPFGIVGLETAFPLLYTNLVQTGELTLKKLVELLTVKPAEAFKLPYGRLEVGAPADLTVMDLETEKTIDPSTFASKGINTPFAGWVCKGWPTLTLVDGKIVYQNV.

Zn(2+)-binding residues include histidine 59 and histidine 61. Residues 61 to 63 (HLR) and asparagine 93 contribute to the substrate site. The Zn(2+) site is built by aspartate 151, histidine 178, and histidine 232. Residue asparagine 279 participates in substrate binding. Zn(2+) is bound at residue aspartate 306. Aspartate 306 is an active-site residue. Substrate-binding positions include histidine 310 and 324-325 (FG).

The protein belongs to the metallo-dependent hydrolases superfamily. DHOase family. Class I DHOase subfamily. The cofactor is Zn(2+).

The enzyme catalyses (S)-dihydroorotate + H2O = N-carbamoyl-L-aspartate + H(+). The protein operates within pyrimidine metabolism; UMP biosynthesis via de novo pathway; (S)-dihydroorotate from bicarbonate: step 3/3. Functionally, catalyzes the reversible cyclization of carbamoyl aspartate to dihydroorotate. This is Dihydroorotase from Brevibacillus brevis (strain 47 / JCM 6285 / NBRC 100599).